A 208-amino-acid chain; its full sequence is Putative thymidylate kinase (208 aa).

A defective ATP-binding region spans residues 12-19; sequence GIDGTGTS.

The protein belongs to the thymidylate kinase family.

The catalysed reaction is dTMP + ATP = dTDP + ADP. This is Putative thymidylate kinase (tmk) from Treponema pallidum (strain Nichols).